We begin with the raw amino-acid sequence, 460 residues long: 3-isopropylmalate dehydratase large subunit (460 aa).

The [4Fe-4S] cluster site is built by Cys338, Cys398, and Cys401.

Belongs to the aconitase/IPM isomerase family. LeuC type 1 subfamily. Heterodimer of LeuC and LeuD. [4Fe-4S] cluster serves as cofactor.

It catalyses the reaction (2R,3S)-3-isopropylmalate = (2S)-2-isopropylmalate. The protein operates within amino-acid biosynthesis; L-leucine biosynthesis; L-leucine from 3-methyl-2-oxobutanoate: step 2/4. In terms of biological role, catalyzes the isomerization between 2-isopropylmalate and 3-isopropylmalate, via the formation of 2-isopropylmaleate. The polypeptide is 3-isopropylmalate dehydratase large subunit (Streptococcus sanguinis (strain SK36)).